Reading from the N-terminus, the 149-residue chain is Transcription factor bHLH153 (149 aa).

Residues 27 to 76 (RHKSDLSFSSKERKDKVGERISALQQIVSPYGKTDTASVLLDAMHYIEFL) form the bHLH domain.

The protein belongs to the bHLH protein family.

It is found in the nucleus. The chain is Transcription factor bHLH153 from Arabidopsis thaliana (Mouse-ear cress).